The following is a 273-amino-acid chain: Undecaprenyl-diphosphatase (273 aa).

8 consecutive transmembrane segments (helical) span residues Ile-3–Pro-23, Gly-48–Phe-68, Leu-89–Glu-109, Leu-116–Ala-136, Ile-151–Phe-171, Ala-192–Leu-212, Phe-225–Leu-245, and Leu-253–Ala-273.

Belongs to the UppP family.

The protein localises to the cell membrane. The catalysed reaction is di-trans,octa-cis-undecaprenyl diphosphate + H2O = di-trans,octa-cis-undecaprenyl phosphate + phosphate + H(+). In terms of biological role, catalyzes the dephosphorylation of undecaprenyl diphosphate (UPP). Confers resistance to bacitracin. The protein is Undecaprenyl-diphosphatase of Anoxybacillus flavithermus (strain DSM 21510 / WK1).